A 496-amino-acid chain; its full sequence is NADP-dependent glyceraldehyde-3-phosphate dehydrogenase (496 aa).

Substrate is bound by residues Arg116 and Asn169–Tyr170. The NADP(+) site is built by Lys192, Thr195, and Asp230. Gly245–Gly249 provides a ligand contact to NAD(+). Glu264 acts as the Proton acceptor in catalysis. Arg297–Thr299 lines the substrate pocket. Cys298 serves as the catalytic Nucleophile. Glu391 is a binding site for NADP(+). Substrate is bound at residue Arg451.

Belongs to the aldehyde dehydrogenase family.

The protein resides in the cytoplasm. The catalysed reaction is D-glyceraldehyde 3-phosphate + NADP(+) + H2O = (2R)-3-phosphoglycerate + NADPH + 2 H(+). Its function is as follows. Important as a means of generating NADPH for biosynthetic reactions. The sequence is that of NADP-dependent glyceraldehyde-3-phosphate dehydrogenase (GAPN) from Nicotiana plumbaginifolia (Leadwort-leaved tobacco).